The primary structure comprises 289 residues: UTP--glucose-1-phosphate uridylyltransferase 2 (289 aa).

The protein belongs to the UDPGP type 2 family.

The enzyme catalyses alpha-D-glucose 1-phosphate + UTP + H(+) = UDP-alpha-D-glucose + diphosphate. Its pathway is glycolipid metabolism; diglucosyl-diacylglycerol biosynthesis. Functionally, catalyzes the formation of UDP-glucose from glucose-1-phosphate and UTP. This is an intermediate step in the biosynthesis of diglucosyl-diacylglycerol (Glc2-DAG), i.e. a glycolipid found in the membrane, which is also used as a membrane anchor for lipoteichoic acid (LTA). In Staphylococcus saprophyticus subsp. saprophyticus (strain ATCC 15305 / DSM 20229 / NCIMB 8711 / NCTC 7292 / S-41), this protein is UTP--glucose-1-phosphate uridylyltransferase 2 (gtaB2).